The sequence spans 134 residues: ATP synthase epsilon chain (134 aa).

Belongs to the ATPase epsilon chain family. F-type ATPases have 2 components, CF(1) - the catalytic core - and CF(0) - the membrane proton channel. CF(1) has five subunits: alpha(3), beta(3), gamma(1), delta(1), epsilon(1). CF(0) has three main subunits: a, b and c.

The protein localises to the cell membrane. Functionally, produces ATP from ADP in the presence of a proton gradient across the membrane. The polypeptide is ATP synthase epsilon chain (Carboxydothermus hydrogenoformans (strain ATCC BAA-161 / DSM 6008 / Z-2901)).